A 262-amino-acid chain; its full sequence is Polyamine aminopropyltransferase (262 aa).

The PABS domain maps to 1–249; sequence MWITQEITPY…DIHRAAFALP (249 aa). Asn-29 contributes to the S-methyl-5'-thioadenosine binding site. A spermidine-binding site is contributed by Asp-83. Asp-155 serves as the catalytic Proton acceptor.

Belongs to the spermidine/spermine synthase family. As to quaternary structure, homodimer or homotetramer.

The protein resides in the cytoplasm. The enzyme catalyses S-adenosyl 3-(methylsulfanyl)propylamine + putrescine = S-methyl-5'-thioadenosine + spermidine + H(+). It functions in the pathway amine and polyamine biosynthesis; spermidine biosynthesis; spermidine from putrescine: step 1/1. Functionally, catalyzes the irreversible transfer of a propylamine group from the amino donor S-adenosylmethioninamine (decarboxy-AdoMet) to putrescine (1,4-diaminobutane) to yield spermidine. This chain is Polyamine aminopropyltransferase, found in Helicobacter pylori (strain HPAG1).